Here is a 420-residue protein sequence, read N- to C-terminus: Subtilisin (420 aa).

A signal peptide spans 1–31 (MKRSGKIFTTAMLAVTLMMPAMGVSANEGNA). The propeptide occupies 32–111 (AAEGNEKFRV…DKPEALYNAM (80 aa)). Gln115 contacts Ca(2+). The Peptidase S8 domain maps to 118-420 (PWGIKAIYNN…ASGFGFATVQ (303 aa)). Asp145 functions as the Charge relay system in the catalytic mechanism. Asp154 provides a ligand contact to Ca(2+). Catalysis depends on charge relay system residues His182 and Ser360.

Belongs to the peptidase S8 family. Ca(2+) is required as a cofactor.

Its subcellular location is the secreted. The enzyme catalyses Hydrolysis of proteins with broad specificity for peptide bonds, and a preference for a large uncharged residue in P1. Hydrolyzes peptide amides.. Functionally, subtilisin is an extracellular alkaline serine protease, it catalyzes the hydrolysis of proteins and peptide amides. This Bacillus sp. (strain TA39) protein is Subtilisin (sub1).